The following is a 306-amino-acid chain: Deoxyribokinase (306 aa).

Substrate contacts are provided by residues 10–12, 38–42, and Glu-139; these read MVD and GKGAN. Residues Asn-184 and 220 to 225 each bind ATP; that span reads TMGEKG. Residues Asp-246 and Ser-248 each coordinate K(+). Residue 251-252 participates in ATP binding; it reads GD. Residue Asp-252 coordinates substrate. Asp-252 serves as the catalytic Proton acceptor. K(+) contacts are provided by Ser-282, Gly-285, Gly-287, and Ser-291.

It belongs to the carbohydrate kinase PfkB family. Deoxyribokinase subfamily. Homodimer. It depends on Mg(2+) as a cofactor.

It localises to the cytoplasm. The catalysed reaction is 2-deoxy-D-ribose + ATP = 2-deoxy-D-ribose 5-phosphate + ADP + H(+). Functionally, catalyzes the ATP-dependent phosphorylation of 2-deoxy-D-ribose to 2-deoxy-D-ribose 5-phosphate (dRib-5P), allowing the use of deoxyribose as the sole carbon source. Can also use D-ribose, with much lower efficiency. The sequence is that of Deoxyribokinase from Salmonella typhi.